Reading from the N-terminus, the 227-residue chain is Cytochrome c oxidase subunit 2 (227 aa).

The Mitochondrial intermembrane segment spans residues 1-14 (MAYPLQLGLQDASS). The chain crosses the membrane as a helical span at residues 15 to 45 (PIMEELMNFHDHTLMIVFLISSLVLYLISLM). The Mitochondrial matrix segment spans residues 46–59 (LTTKLIHTSTMDAQ). The helical transmembrane segment at 60–87 (EVETVWTILPAIILILIALPSLRILYMM) threads the bilayer. Over 88 to 227 (DEINNPVLTV…LFENWSLSLT (140 aa)) the chain is Mitochondrial intermembrane. Residues histidine 161, cysteine 196, glutamate 198, cysteine 200, histidine 204, and methionine 207 each contribute to the Cu cation site. Residue glutamate 198 participates in Mg(2+) binding.

This sequence belongs to the cytochrome c oxidase subunit 2 family. As to quaternary structure, component of the cytochrome c oxidase (complex IV, CIV), a multisubunit enzyme composed of 14 subunits. The complex is composed of a catalytic core of 3 subunits MT-CO1, MT-CO2 and MT-CO3, encoded in the mitochondrial DNA, and 11 supernumerary subunits COX4I, COX5A, COX5B, COX6A, COX6B, COX6C, COX7A, COX7B, COX7C, COX8 and NDUFA4, which are encoded in the nuclear genome. The complex exists as a monomer or a dimer and forms supercomplexes (SCs) in the inner mitochondrial membrane with NADH-ubiquinone oxidoreductase (complex I, CI) and ubiquinol-cytochrome c oxidoreductase (cytochrome b-c1 complex, complex III, CIII), resulting in different assemblies (supercomplex SCI(1)III(2)IV(1) and megacomplex MCI(2)III(2)IV(2)). Found in a complex with TMEM177, COA6, COX18, COX20, SCO1 and SCO2. Interacts with TMEM177 in a COX20-dependent manner. Interacts with COX20. Interacts with COX16. It depends on Cu cation as a cofactor.

It localises to the mitochondrion inner membrane. It carries out the reaction 4 Fe(II)-[cytochrome c] + O2 + 8 H(+)(in) = 4 Fe(III)-[cytochrome c] + 2 H2O + 4 H(+)(out). Its function is as follows. Component of the cytochrome c oxidase, the last enzyme in the mitochondrial electron transport chain which drives oxidative phosphorylation. The respiratory chain contains 3 multisubunit complexes succinate dehydrogenase (complex II, CII), ubiquinol-cytochrome c oxidoreductase (cytochrome b-c1 complex, complex III, CIII) and cytochrome c oxidase (complex IV, CIV), that cooperate to transfer electrons derived from NADH and succinate to molecular oxygen, creating an electrochemical gradient over the inner membrane that drives transmembrane transport and the ATP synthase. Cytochrome c oxidase is the component of the respiratory chain that catalyzes the reduction of oxygen to water. Electrons originating from reduced cytochrome c in the intermembrane space (IMS) are transferred via the dinuclear copper A center (CU(A)) of subunit 2 and heme A of subunit 1 to the active site in subunit 1, a binuclear center (BNC) formed by heme A3 and copper B (CU(B)). The BNC reduces molecular oxygen to 2 water molecules using 4 electrons from cytochrome c in the IMS and 4 protons from the mitochondrial matrix. This chain is Cytochrome c oxidase subunit 2 (MT-CO2), found in Taterillus emini (Emin's gerbil).